Here is a 407-residue protein sequence, read N- to C-terminus: Elongation factor Tu (407 aa).

The 208-residue stretch at 10–217 (KPHVNVGTIG…TLDTYIPDPE (208 aa)) folds into the tr-type G domain. Residues 19 to 26 (GHVDHGKT) are G1. 19-26 (GHVDHGKT) lines the GTP pocket. Residue Thr-26 participates in Mg(2+) binding. A G2 region spans residues 60–64 (GITIS). Positions 81 to 84 (DCPG) are G3. GTP is bound by residues 81–85 (DCPGH) and 136–139 (NKSD). Residues 136-139 (NKSD) are G4. Residues 184 to 186 (SAL) form a G5 region.

This sequence belongs to the TRAFAC class translation factor GTPase superfamily. Classic translation factor GTPase family. EF-Tu/EF-1A subfamily. Monomer.

It localises to the cytoplasm. It catalyses the reaction GTP + H2O = GDP + phosphate + H(+). GTP hydrolase that promotes the GTP-dependent binding of aminoacyl-tRNA to the A-site of ribosomes during protein biosynthesis. In Marinomonas sp. (strain MWYL1), this protein is Elongation factor Tu.